The chain runs to 708 residues: WD repeat-containing and planar cell polarity effector protein fritz homolog (708 aa).

2 WD repeats span residues 303 to 342 and 343 to 382; these read PLRS…TLLA and QADL…IRAQ.

This sequence belongs to the WD repeat fritz family. As to quaternary structure, interacts with sept2-a. Interacts with intu and fuz; fuz, intu and wdpcp probably form the core CPLANE (ciliogenesis and planar polarity effectors) complex.

The protein resides in the cell membrane. It is found in the cytoplasm. The protein localises to the cytoskeleton. Its subcellular location is the cilium axoneme. It localises to the cilium basal body. Functionally, probable effector of the planar cell polarity signaling pathway which regulates the septin cytoskeleton in both ciliogenesis and collective cell movements including covergent extension during gastrulation. Controls cell shape but not polarization during convergent extension. Proposed to function as core component of the CPLANE (ciliogenesis and planar polarity effectors) complex involved in the recruitment of peripheral IFT-A proteins to basal bodies. This chain is WD repeat-containing and planar cell polarity effector protein fritz homolog (wdpcp), found in Xenopus laevis (African clawed frog).